A 539-amino-acid polypeptide reads, in one-letter code: Protein Wnt-4 (539 aa).

The first 21 residues, 1–21 (MPSPTGVFVLMILTHLSFGLG), serve as a signal peptide directing secretion. Positions 34–77 (QNGDLDSSNPAIHHQQHQQHQQHQQHQQHQSNHNLNNGNMNSTI) are disordered. The span at 51-74 (QQHQQHQQHQQHQSNHNLNNGNMN) shows a compositional bias: low complexity. Asn-74 and Asn-284 each carry an N-linked (GlcNAc...) asparagine glycan. Cystine bridges form between Cys-274-Cys-285, Cys-322-Cys-330, Cys-332-Cys-349, Cys-397-Cys-411, and Cys-399-Cys-406. Ser-403 is lipidated: O-palmitoleoyl serine; by PORCN. Asn-419 carries an N-linked (GlcNAc...) asparagine glycan. Positions 436-463 (APNQRSMRQVSSSRMKKPKQRRKKPQQS) are disordered. The segment covering 439–448 (QRSMRQVSSS) has biased composition (low complexity). Residues 449–460 (RMKKPKQRRKKP) show a composition bias toward basic residues. Cystine bridges form between Cys-478–Cys-497, Cys-486–Cys-492, Cys-496–Cys-538, Cys-512–Cys-529, Cys-514–Cys-526, and Cys-521–Cys-522.

This sequence belongs to the Wnt family. In terms of processing, palmitoleoylated by porcupine. The lipid group functions as a sorting signal, targeting the ligand to polarized vesicles that transport Wnt4 to unique sites at the cell surface. Depalmitoleoylated by notum, leading to inhibit Wnt signaling pathway.

Its subcellular location is the secreted. The protein localises to the extracellular space. It is found in the extracellular matrix. Functionally, binds as a ligand to a family of frizzled seven-transmembrane receptors and acts through a cascade of genes on the nucleus. Acts downstream of homeotic complex genes in the visceral mesoderm and is required for embryonic segmentation. Also required for cell movement and FAK regulation during ovarian morphogenesis. This Drosophila melanogaster (Fruit fly) protein is Protein Wnt-4 (Wnt4).